The following is a 652-amino-acid chain: ATP-dependent zinc metalloprotease FtsH 1 (652 aa).

Over 1 to 9 (MSDNKWLRN) the chain is Cytoplasmic. The helical transmembrane segment at 10 to 30 (GFVWMILIIAAIAVWVTFVQG) threads the bilayer. The Extracellular segment spans residues 31 to 110 (GRGGATITTQ…QTHRASQWGN (80 aa)). A helical transmembrane segment spans residues 111 to 131 (VLGTLTFLLPTLFLIGVIIFM). The Cytoplasmic portion of the chain corresponds to 132-652 (MRQAQGTNNQ…VPHIKPQPAS (521 aa)). 203 to 210 (GPPGTGKT) is a binding site for ATP. Residue H425 coordinates Zn(2+). The active site involves E426. H429 and D501 together coordinate Zn(2+). Residues 623–652 (IATPETARPDSPSEARPAAPVPHIKPQPAS) are disordered. Positions 641–652 (APVPHIKPQPAS) are enriched in pro residues.

The protein in the central section; belongs to the AAA ATPase family. In the C-terminal section; belongs to the peptidase M41 family. In terms of assembly, homohexamer. Requires Zn(2+) as cofactor.

It is found in the cell membrane. Its function is as follows. Acts as a processive, ATP-dependent zinc metallopeptidase for both cytoplasmic and membrane proteins. Plays a role in the quality control of integral membrane proteins. The polypeptide is ATP-dependent zinc metalloprotease FtsH 1 (Thermomicrobium roseum (strain ATCC 27502 / DSM 5159 / P-2)).